We begin with the raw amino-acid sequence, 294 residues long: Ventral anterior homeobox 2b (294 aa).

The segment covering 1 to 10 (MGDGVSEERS) has biased composition (basic and acidic residues). Disordered stretches follow at residues 1–27 (MGDGVSEERSPLCGKSATSCSERVRDR), 43–65 (KDIPVTSTSSPGSSKEEVLDSQS), 149–168 (RRTKQKKDQSRDSEKRSSST), 190–223 (PAPPNMISSQNNMGTSSGNGTSLGTSGSTSPVIS), and 272–294 (SSAFEPYTRLDRKDTASGKKSTS). Positions 98–157 (PKRTRTSFTAEQLYRLELEFQRCQYVVGRERTELARQLNLSETQVKVWFQNRRTKQKKDQ) form a DNA-binding region, homeobox. A compositionally biased stretch (basic and acidic residues) spans 154–165 (KKDQSRDSEKRS). Residues 197–219 (SSQNNMGTSSGNGTSLGTSGSTS) are compositionally biased toward low complexity. Basic and acidic residues predominate over residues 279 to 288 (TRLDRKDTAS).

This sequence belongs to the EMX homeobox family.

The protein localises to the nucleus. Its function is as follows. Transcription factor that may function in dorsoventral specification of the forebrain. Regulates the expression of Wnt signaling antagonists. The protein is Ventral anterior homeobox 2b (vax2-b) of Xenopus laevis (African clawed frog).